The chain runs to 496 residues: UDP-N-acetylmuramate--L-alanine ligase (496 aa).

An ATP-binding site is contributed by 122–128 (GTHGKTT).

It belongs to the MurCDEF family.

The protein localises to the cytoplasm. The catalysed reaction is UDP-N-acetyl-alpha-D-muramate + L-alanine + ATP = UDP-N-acetyl-alpha-D-muramoyl-L-alanine + ADP + phosphate + H(+). It participates in cell wall biogenesis; peptidoglycan biosynthesis. Functionally, cell wall formation. The sequence is that of UDP-N-acetylmuramate--L-alanine ligase from Mycolicibacterium paratuberculosis (strain ATCC BAA-968 / K-10) (Mycobacterium paratuberculosis).